Reading from the N-terminus, the 486-residue chain is Glycogen synthase (486 aa).

Residue Lys-15 coordinates ADP-alpha-D-glucose.

This sequence belongs to the glycosyltransferase 1 family. Bacterial/plant glycogen synthase subfamily.

The enzyme catalyses [(1-&gt;4)-alpha-D-glucosyl](n) + ADP-alpha-D-glucose = [(1-&gt;4)-alpha-D-glucosyl](n+1) + ADP + H(+). It participates in glycan biosynthesis; glycogen biosynthesis. Synthesizes alpha-1,4-glucan chains using ADP-glucose. This chain is Glycogen synthase, found in Thermotoga maritima (strain ATCC 43589 / DSM 3109 / JCM 10099 / NBRC 100826 / MSB8).